The primary structure comprises 144 residues: Small ribosomal subunit protein uS12 (144 aa).

Positions 1 to 55 are disordered; that stretch reads MPTINQLVRKGREDKVVKSKSPALQKGYNSFKKSQTNQSSPQKRGVCTRVGTMTP. The span at 27–42 shows a compositional bias: polar residues; that stretch reads GYNSFKKSQTNQSSPQ. Asp-102 carries the post-translational modification 3-methylthioaspartic acid. The segment at 119 to 144 is disordered; it reads GVNNRKQGRSKYGTKRPKPGQAAAKK. The span at 124-144 shows a compositional bias: basic residues; that stretch reads KQGRSKYGTKRPKPGQAAAKK.

It belongs to the universal ribosomal protein uS12 family. Part of the 30S ribosomal subunit. Contacts proteins S8 and S17. May interact with IF1 in the 30S initiation complex.

With S4 and S5 plays an important role in translational accuracy. Its function is as follows. Interacts with and stabilizes bases of the 16S rRNA that are involved in tRNA selection in the A site and with the mRNA backbone. Located at the interface of the 30S and 50S subunits, it traverses the body of the 30S subunit contacting proteins on the other side and probably holding the rRNA structure together. The combined cluster of proteins S8, S12 and S17 appears to hold together the shoulder and platform of the 30S subunit. The polypeptide is Small ribosomal subunit protein uS12 (Brevibacillus brevis (strain 47 / JCM 6285 / NBRC 100599)).